The primary structure comprises 132 residues: Large ribosomal subunit protein uL24 (132 aa).

The protein belongs to the universal ribosomal protein uL24 family. Part of the 50S ribosomal subunit.

One of two assembly initiator proteins, it binds directly to the 5'-end of the 23S rRNA, where it nucleates assembly of the 50S subunit. Its function is as follows. One of the proteins that surrounds the polypeptide exit tunnel on the outside of the subunit. This Synechococcus sp. (strain JA-3-3Ab) (Cyanobacteria bacterium Yellowstone A-Prime) protein is Large ribosomal subunit protein uL24.